The chain runs to 344 residues: RNA 3'-terminal phosphate cyclase (344 aa).

ATP is bound by residues Gln102 and 284-288; that span reads FLGDQ. His308 serves as the catalytic Tele-AMP-histidine intermediate.

It belongs to the RNA 3'-terminal cyclase family. Type 1 subfamily.

The protein resides in the cytoplasm. It carries out the reaction a 3'-end 3'-phospho-ribonucleotide-RNA + ATP = a 3'-end 2',3'-cyclophospho-ribonucleotide-RNA + AMP + diphosphate. In terms of biological role, catalyzes the conversion of 3'-phosphate to a 2',3'-cyclic phosphodiester at the end of RNA. The mechanism of action of the enzyme occurs in 3 steps: (A) adenylation of the enzyme by ATP; (B) transfer of adenylate to an RNA-N3'P to produce RNA-N3'PP5'A; (C) and attack of the adjacent 2'-hydroxyl on the 3'-phosphorus in the diester linkage to produce the cyclic end product. The biological role of this enzyme is unknown but it is likely to function in some aspects of cellular RNA processing. This is RNA 3'-terminal phosphate cyclase from Thermococcus gammatolerans (strain DSM 15229 / JCM 11827 / EJ3).